Consider the following 266-residue polypeptide: Small ribosomal subunit protein uS2 (266 aa).

The protein belongs to the universal ribosomal protein uS2 family.

This Paramagnetospirillum magneticum (strain ATCC 700264 / AMB-1) (Magnetospirillum magneticum) protein is Small ribosomal subunit protein uS2.